The primary structure comprises 458 residues: Methionine aminopeptidase 2-2 (458 aa).

A compositionally biased stretch (basic and acidic residues) spans 1–14 (MGSKTPERDGHKGQ). Positions 1–93 (MGSKTPERDG…QSSPPRVPLS (93 aa)) are disordered. Residues 67–82 (QKKKRKSKKKGKKKAA) are compositionally biased toward basic residues. A substrate-binding site is contributed by H209. Residues D230, D241, and H310 each contribute to the a divalent metal cation site. Position 318 (H318) interacts with substrate. Residues E343 and E439 each contribute to the a divalent metal cation site.

Belongs to the peptidase M24A family. Methionine aminopeptidase eukaryotic type 2 subfamily. Co(2+) serves as cofactor. It depends on Zn(2+) as a cofactor. Mn(2+) is required as a cofactor. The cofactor is Fe(2+).

It localises to the cytoplasm. It catalyses the reaction Release of N-terminal amino acids, preferentially methionine, from peptides and arylamides.. In terms of biological role, cotranslationally removes the N-terminal methionine from nascent proteins. The N-terminal methionine is often cleaved when the second residue in the primary sequence is small and uncharged (Met-Ala-, Cys, Gly, Pro, Ser, Thr, or Val). This is Methionine aminopeptidase 2-2 from Emericella nidulans (strain FGSC A4 / ATCC 38163 / CBS 112.46 / NRRL 194 / M139) (Aspergillus nidulans).